The sequence spans 150 residues: Macrodomain Ter protein (150 aa).

The protein belongs to the MatP family. Homodimer.

Its subcellular location is the cytoplasm. Functionally, required for spatial organization of the terminus region of the chromosome (Ter macrodomain) during the cell cycle. Prevents early segregation of duplicated Ter macrodomains during cell division. Binds specifically to matS, which is a 13 bp signature motif repeated within the Ter macrodomain. In Salmonella typhi, this protein is Macrodomain Ter protein.